Here is a 127-residue protein sequence, read N- to C-terminus: Large ribosomal subunit protein eL8 (127 aa).

This sequence belongs to the eukaryotic ribosomal protein eL8 family. As to quaternary structure, part of the 50S ribosomal subunit. Probably part of the RNase P complex.

It localises to the cytoplasm. Functionally, multifunctional RNA-binding protein that recognizes the K-turn motif in ribosomal RNA, the RNA component of RNase P, box H/ACA, box C/D and box C'/D' sRNAs. In Hyperthermus butylicus (strain DSM 5456 / JCM 9403 / PLM1-5), this protein is Large ribosomal subunit protein eL8.